The chain runs to 388 residues: Acetate kinase (388 aa).

N7 contributes to the Mg(2+) binding site. K14 is an ATP binding site. R76 contacts substrate. D133 serves as the catalytic Proton donor/acceptor. Residues 193–197, 267–269, and 315–319 each bind ATP; these read HLGNG, DMR, and GIGEN. Residue E374 participates in Mg(2+) binding.

Belongs to the acetokinase family. As to quaternary structure, homodimer. Requires Mg(2+) as cofactor. Mn(2+) is required as a cofactor.

Its subcellular location is the cytoplasm. The catalysed reaction is acetate + ATP = acetyl phosphate + ADP. It functions in the pathway metabolic intermediate biosynthesis; acetyl-CoA biosynthesis; acetyl-CoA from acetate: step 1/2. Functionally, catalyzes the formation of acetyl phosphate from acetate and ATP. Can also catalyze the reverse reaction. In Micrococcus luteus (strain ATCC 4698 / DSM 20030 / JCM 1464 / CCM 169 / CCUG 5858 / IAM 1056 / NBRC 3333 / NCIMB 9278 / NCTC 2665 / VKM Ac-2230) (Micrococcus lysodeikticus), this protein is Acetate kinase.